The following is a 109-amino-acid chain: Histidine-rich carboxyl terminus protein 1 (109 aa).

A helical membrane pass occupies residues Trp13–Phe33. Positions Thr77–Arg109 are disordered. Basic residues predominate over residues Val81–Arg109.

Its subcellular location is the membrane. The protein is Histidine-rich carboxyl terminus protein 1 (Hrct1) of Mus musculus (Mouse).